The primary structure comprises 24 residues: Brevinin-1Ecb (24 aa).

A disulfide bond links Cys-18 and Cys-24.

As to expression, expressed by the skin glands.

The protein resides in the secreted. Shows antibacterial activity against representative Gram-negative and Gram-positive bacterial species, and hemolytic activity. This chain is Brevinin-1Ecb, found in Pelophylax ridibundus (Marsh frog).